The following is a 114-amino-acid chain: Protein ORF3 (114 aa).

The interval 1-28 (MGSRPCALGLFCCCSSCFCLCCPRHRPV) is membrane association. 2 hydrophobic regions span residues 6 to 22 (CALG…CLCC) and 33 to 53 (AAVG…GLIL). The induction of host SIRPA expression stretch occupies residues 6–22 (CALGLFCCCSSCFCLCC). The tract at residues 28-68 (VSRLAAAVGGAAAVPAVVSGVTGLILSPSQSPIFIQPTPSP) is interaction with host HPX. An interaction with the capsid protein region spans residues 48–72 (VTGLILSPSQSPIFIQPTPSPPMSP). The residue at position 71 (Ser-71) is a Phosphoserine; by host. The interval 72-114 (PLRPGLDLVFANPPDHSAPLGVTRPSAPPLPHVVDLPQLGPRR) is homodimerization, and interaction with host AMBP/bikunin. A disordered region spans residues 91–114 (LGVTRPSAPPLPHVVDLPQLGPRR). The interaction with host SRC, HCK, FYN, PIK3R3 and GRB2 stretch occupies residues 95–104 (RPSAPPLPHV). Residues 96–99 (PSAP) carry the PTAP/PSAP motif motif.

It belongs to the hepevirus ORF3 protein family. Forms homooligomers. Interacts with host SRC, HCK, FYN, PIK3R3 and GRB2 (via SH3 domain); binding does not activate the kinases. Interacts with host AMBP/bikunin and AMBP/alpha-1-microglobulin peptides. Interacts with host HPX/hemopexin. Interacts (when phosphorylated) with capsid protein ORF2. Interacts with host TSG101; this interaction plays a role in viral release from the host cell. Interacts with host SIRPA; this interaction down-regulates the phosphorylation of host IRF3. Post-translationally, palmitoylated in the N-terminus.

It localises to the host endoplasmic reticulum membrane. Its subcellular location is the host cytoplasm. It is found in the host cytoskeleton. The protein localises to the virion. The protein resides in the host cell membrane. In terms of biological role, small multifunctional phosphoprotein involved in virion morphogenesis, egress and counteracting host innate immunity. Plays critical roles in the final steps of viral release by interacting with host TSG101, a member of the vacuolar protein-sorting pathway and using other cellular host proteins involved in vesicle formation pathway. Also acts as a viroporin and forms ion conductive pores allowing viral particle release. Impairs the generation of type I interferon by down-regulating host TLR3 and TLR7 as well as their downstream signaling pathways. Down-regulates the phosphorylation of host IRF3 via the interaction with host SIRP-alpha, thereby inhibiting IFN-I expression. Interacts with host microtubules. This chain is Protein ORF3, found in Hepatitis E virus genotype 1 (isolate Human/China/HeBei/1987) (HEV).